A 310-amino-acid polypeptide reads, in one-letter code: Tagatose-6-phosphate kinase (310 aa).

Belongs to the carbohydrate kinase PfkB family. LacC subfamily.

It carries out the reaction D-tagatofuranose 6-phosphate + ATP = D-tagatofuranose 1,6-bisphosphate + ADP + H(+). The protein operates within carbohydrate metabolism; D-tagatose 6-phosphate degradation; D-glyceraldehyde 3-phosphate and glycerone phosphate from D-tagatose 6-phosphate: step 1/2. The polypeptide is Tagatose-6-phosphate kinase (Staphylococcus aureus (strain Mu3 / ATCC 700698)).